The chain runs to 354 residues: Kelch domain-containing protein 8B (354 aa).

Kelch repeat units follow at residues 1 to 31 (MAAGGGRAFAWQVFPPMPTCRVYGTVAHQDG), 32 to 79 (HLLV…VLGK), 81 to 127 (VLVV…ERDG), 128 to 175 (MVYA…LHGN), 176 to 222 (KIYV…MAEG), 224 to 281 (VFSL…SLGG), 282 to 329 (NIVA…QAGP), and 331 to 354 (LFVIGGVAQGPSQAVEALCLRDGV).

It localises to the cytoplasm. Its subcellular location is the midbody. In terms of biological role, involved in pinching off the separated nuclei at the cleavage furrow and in cytokinesis. Required for mitotic integrity and maintenance of chromosomal stability. Protects cells against mitotic errors, centrosomal amplification, micronucleus formation and aneuploidy. Plays a key role of midbody function involving abscission of the daughter cells during cytokinesis and appropriate chromosomal and nuclear segregation into the daughter cells. This is Kelch domain-containing protein 8B (Klhdc8b) from Mus musculus (Mouse).